We begin with the raw amino-acid sequence, 288 residues long: 4-hydroxy-tetrahydrodipicolinate synthase (288 aa).

T43 contacts pyruvate. The active-site Proton donor/acceptor is Y131. The Schiff-base intermediate with substrate role is filled by K160. I200 contributes to the pyruvate binding site.

It belongs to the DapA family. In terms of assembly, homotetramer; dimer of dimers.

The protein localises to the cytoplasm. The enzyme catalyses L-aspartate 4-semialdehyde + pyruvate = (2S,4S)-4-hydroxy-2,3,4,5-tetrahydrodipicolinate + H2O + H(+). Its pathway is amino-acid biosynthesis; L-lysine biosynthesis via DAP pathway; (S)-tetrahydrodipicolinate from L-aspartate: step 3/4. Its function is as follows. Catalyzes the condensation of (S)-aspartate-beta-semialdehyde [(S)-ASA] and pyruvate to 4-hydroxy-tetrahydrodipicolinate (HTPA). This chain is 4-hydroxy-tetrahydrodipicolinate synthase, found in Methanococcus aeolicus (strain ATCC BAA-1280 / DSM 17508 / OCM 812 / Nankai-3).